The sequence spans 143 residues: UPF0047 protein MTH_771 (143 aa).

This sequence belongs to the UPF0047 family.

The protein is UPF0047 protein MTH_771 of Methanothermobacter thermautotrophicus (strain ATCC 29096 / DSM 1053 / JCM 10044 / NBRC 100330 / Delta H) (Methanobacterium thermoautotrophicum).